A 306-amino-acid chain; its full sequence is Curved DNA-binding protein (306 aa).

The region spanning 5–69 (DYYAIMGVKP…QRRAEYDQMW (65 aa)) is the J domain.

It is found in the cytoplasm. Its subcellular location is the nucleoid. In terms of biological role, DNA-binding protein that preferentially recognizes a curved DNA sequence. It is probably a functional analog of DnaJ; displays overlapping activities with DnaJ, but functions under different conditions, probably acting as a molecular chaperone in an adaptive response to environmental stresses other than heat shock. Lacks autonomous chaperone activity; binds native substrates and targets them for recognition by DnaK. Its activity is inhibited by the binding of CbpM. This is Curved DNA-binding protein from Escherichia coli O8 (strain IAI1).